The sequence spans 27 residues: Snake venom serine protease Afaacytin alpha/beta/beta' chains (27 aa).

One can recognise a Peptidase S1 domain in the interval Val1–Glu27.

Belongs to the peptidase S1 family. Snake venom subfamily. In terms of assembly, heterodimer of an alpha and a beta chain. Subunit beta is constituted of two disulfide-linked polypeptidic chains, beta and beta'. Calcium appears to be required for structural cohesion of the molecule. Post-translationally, both chains alpha and beta are N-glycosylated. As to expression, expressed by the venom gland.

Its subcellular location is the secreted. Its activity is regulated as follows. Inhibited by diisopropylfluorophosphate (DFP), benzamidine, heparin and hirudin, but not by plasmatic thrombin inhibitors, antithrombin-III and ecotin. Snake venom serine protease that exhibits alpha-fibrinase and beta-fibrinogenase activities. It replaces missing factors VIII (F8) and IX (F9) in deficient plasmas by activating purified human factor X (F10) into factor Xa. It releases serotonin from platelets and induces platelet aggregation in human (but not in rabbit). Has caseinolytic, arginine-esterase and amidase activities. This chain is Snake venom serine protease Afaacytin alpha/beta/beta' chains, found in Cerastes cerastes (Horned desert viper).